Here is a 552-residue protein sequence, read N- to C-terminus: Cytochrome P450 97B1, chloroplastic (552 aa).

A chloroplast-targeting transit peptide spans 1–52 (MVAAPISTVKLTDANLHTRFHSSSSSTPSTLSLPLSLHFHFSSHSKRFSSIR). A heme-binding site is contributed by cysteine 528.

This sequence belongs to the cytochrome P450 family. The cofactor is heme.

It localises to the plastid. It is found in the chloroplast membrane. This Pisum sativum (Garden pea) protein is Cytochrome P450 97B1, chloroplastic (CYP97B1).